The chain runs to 212 residues: Uracil phosphoribosyltransferase (212 aa).

5-phospho-alpha-D-ribose 1-diphosphate-binding positions include R78, R103, and 130 to 138 (DPMLATGGS). Uracil is bound by residues I193 and 198-200 (GDA). D199 serves as a coordination point for 5-phospho-alpha-D-ribose 1-diphosphate.

This sequence belongs to the UPRTase family. The cofactor is Mg(2+).

It carries out the reaction UMP + diphosphate = 5-phospho-alpha-D-ribose 1-diphosphate + uracil. Its pathway is pyrimidine metabolism; UMP biosynthesis via salvage pathway; UMP from uracil: step 1/1. Allosterically activated by GTP. Functionally, catalyzes the conversion of uracil and 5-phospho-alpha-D-ribose 1-diphosphate (PRPP) to UMP and diphosphate. This is Uracil phosphoribosyltransferase from Azotobacter vinelandii (strain DJ / ATCC BAA-1303).